We begin with the raw amino-acid sequence, 691 residues long: Probable E3 ubiquitin-protein ligase RHG1A (691 aa).

5 disordered regions span residues 71–91 (SLGE…NEQR), 151–235 (GPGT…PRGM), 316–336 (SFVV…GSRT), 349–373 (VGGT…SRSI), and 395–501 (QSSR…MHNR). Residues 80-91 (TKDEASSHNEQR) show a composition bias toward basic and acidic residues. 2 stretches are compositionally biased toward polar residues: residues 204–213 (GESSSWTPGS) and 317–328 (FVVSRNPNSTPV). Over residues 361-370 (RNLHLDETRS) the composition is skewed to basic and acidic residues. The span at 395 to 406 (QSSRNVTNGNLN) shows a compositional bias: polar residues. Over residues 407-419 (SASSVSRTGSTTS) the composition is skewed to low complexity. Over residues 429–440 (NLAWTSYQNSPH) the composition is skewed to polar residues. Over residues 454-465 (RSLLSSLAADAT) the composition is skewed to low complexity. The RING-type; atypical zinc finger occupies 637–678 (CCVCQEEYTEGEDMGTLECGHEFHSQCIKEWLKQKNLCPICK).

In terms of tissue distribution, expressed in stems, flowers, green siliques, cauline leaves, seeds and roots.

The catalysed reaction is S-ubiquitinyl-[E2 ubiquitin-conjugating enzyme]-L-cysteine + [acceptor protein]-L-lysine = [E2 ubiquitin-conjugating enzyme]-L-cysteine + N(6)-ubiquitinyl-[acceptor protein]-L-lysine.. It participates in protein modification; protein ubiquitination. In terms of biological role, probable E3 ubiquitin-protein ligase that may possess E3 ubiquitin ligase activity in vitro. This Arabidopsis thaliana (Mouse-ear cress) protein is Probable E3 ubiquitin-protein ligase RHG1A.